The following is a 106-amino-acid chain: Large ribosomal subunit protein bL21 (106 aa).

It belongs to the bacterial ribosomal protein bL21 family. As to quaternary structure, part of the 50S ribosomal subunit. Contacts protein L20.

Its function is as follows. This protein binds to 23S rRNA in the presence of protein L20. In Coprothermobacter proteolyticus (strain ATCC 35245 / DSM 5265 / OCM 4 / BT), this protein is Large ribosomal subunit protein bL21.